Here is a 615-residue protein sequence, read N- to C-terminus: Fibrinogen alpha chain (615 aa).

The signal sequence occupies residues 1 to 19; the sequence is MFSVRDLCLVLSLVGAIKT. Residues 71-602 adopt a coiled-coil conformation; sequence CRMKGLIDEV…GHTKARPARG (532 aa). The tract at residues 267–427 is disordered; that stretch reads FGGDGHARGD…TKQEFHTGKL (161 aa). Over residues 293–302 the composition is skewed to polar residues; sequence GTSSIGNVNP. T325 carries an O-linked (GalNAc...) threonine glycan. A compositionally biased stretch (low complexity) spans 373–396; the sequence is GSAGTWNTGSSGSSSFRPDSSGHG. C455 and C485 are joined by a disulfide. The segment at 530–615 is disordered; it reads EFAALGESGS…SPLGEPSLTP (86 aa). Low complexity predominate over residues 537 to 549; sequence SGSSSSKTSTHSK. The span at 550-560 shows a compositional bias: polar residues; sequence QFVSSSTTVNR. Positions 591–601 are enriched in basic residues; sequence QKGHTKARPAR.

As to quaternary structure, heterohexamer; disulfide linked. Contains 2 sets of 3 non-identical chains (alpha, beta and gamma). The 2 heterotrimers are in head to head conformation with the N-termini in a small central domain. Conversion of fibrinogen to fibrin is triggered by thrombin, which cleaves fibrinopeptides A and B from alpha and beta chains, and thus exposes the N-terminal polymerization sites responsible for the formation of the soft clot. The soft clot is converted into the hard clot by factor XIIIA which catalyzes the epsilon-(gamma-glutamyl)lysine cross-linking between gamma chains (stronger) and between alpha chains (weaker) of different monomers. In terms of processing, forms F13A-mediated cross-links between a glutamine and the epsilon-amino group of a lysine residue, forming fibronectin-fibrinogen heteropolymers.

The protein localises to the secreted. Functionally, cleaved by the protease thrombin to yield monomers which, together with fibrinogen beta (FGB) and fibrinogen gamma (FGG), polymerize to form an insoluble fibrin matrix. Fibrin has a major function in hemostasis as one of the primary components of blood clots. In addition, functions during the early stages of wound repair to stabilize the lesion and guide cell migration during re-epithelialization. Was originally thought to be essential for platelet aggregation, based on in vitro studies using anticoagulated blood. However, subsequent studies have shown that it is not absolutely required for thrombus formation in vivo. Enhances expression of SELP in activated platelets via an ITGB3-dependent pathway. Maternal fibrinogen is essential for successful pregnancy. Fibrin deposition is also associated with infection, where it protects against IFNG-mediated hemorrhage. May also facilitate the immune response via both innate and T-cell mediated pathways. This chain is Fibrinogen alpha chain (FGA), found in Bos taurus (Bovine).